A 345-amino-acid chain; its full sequence is D-fructose 1,6-bisphosphatase class 2/sedoheptulose 1,7-bisphosphatase (345 aa).

Mn(2+)-binding residues include D33, E57, D97, and E100. Substrate is bound by residues 100–102 (EGT), Y131, 176–178 (RPR), and 198–200 (DGD). A Mn(2+)-binding site is contributed by E225.

This sequence belongs to the FBPase class 2 family. In terms of assembly, homotetramer. It depends on Mn(2+) as a cofactor.

It catalyses the reaction beta-D-fructose 1,6-bisphosphate + H2O = beta-D-fructose 6-phosphate + phosphate. It carries out the reaction D-sedoheptulose 1,7-bisphosphate + H2O = D-sedoheptulose 7-phosphate + phosphate. It participates in carbohydrate biosynthesis; Calvin cycle. In terms of biological role, catalyzes the hydrolysis of fructose 1,6-bisphosphate (Fru 1,6-P2) and sedoheptulose 1,7-bisphosphate (Sed 1,7-P2) to fructose 6-phosphate and sedoheptulose 7-phosphate, respectively. The chain is D-fructose 1,6-bisphosphatase class 2/sedoheptulose 1,7-bisphosphatase from Crocosphaera subtropica (strain ATCC 51142 / BH68) (Cyanothece sp. (strain ATCC 51142)).